Reading from the N-terminus, the 346-residue chain is Elongation factor Ts (346 aa).

Residues 80-83 are involved in Mg(2+) ion dislocation from EF-Tu; the sequence is TDFV.

This sequence belongs to the EF-Ts family.

It localises to the cytoplasm. Associates with the EF-Tu.GDP complex and induces the exchange of GDP to GTP. It remains bound to the aminoacyl-tRNA.EF-Tu.GTP complex up to the GTP hydrolysis stage on the ribosome. The protein is Elongation factor Ts of Streptococcus agalactiae serotype Ia (strain ATCC 27591 / A909 / CDC SS700).